The following is a 623-amino-acid chain: Chaperone protein dnaK (623 aa).

The interval 598–623 is disordered; sequence TPDAGAEGGAAPSQDDAIETDFSTEK.

Belongs to the heat shock protein 70 family.

The protein resides in the plastid. It localises to the chloroplast. Its function is as follows. Acts as a chaperone. This chain is Chaperone protein dnaK, found in Emiliania huxleyi (Coccolithophore).